The primary structure comprises 938 residues: MSDYKSTLNLPETGFPMRGDLAKREPGMLARWTDDDLYGIIRAAKKGKKTFILHDGPPYANGSIHIGHSVNKILKDIIVKSKGLSGYDSPYVPGWDCHGLPIELKVEQEYGKPGEKFTAAEFRAKCREYAATQVDGQRKDFIRLGVLGDWSHPYLTMDFKTEANIIRALGKIIGNGHLHKGAKPVHWCVDCRSALAEAEVEYYDKTSPSIDVAFQAVDQDALKAKFAVSNVNGPISLVIWTTTPWTLPANRAISIAPDFDYALVQIDGQAVILAKDLVESVMQRIGVTDYTILGTVKGAELELLRFTHPFMGFDVPAILGDHVTLDAGTGAVHTAPGHGPDDYVIGQKYGLETANPVGPDGTYLPGTYPTLDGVNVFKANDIVVALLQEKGALLHVEKMQHSYPCCWRHKTPIIFRATPQWFVSMDQKGLRAQSLKEIKGVQWIPDWGQARIESMVANRPDWCISRQRTWGVPMSLFVHKDTEELHPRTLELMEEVAKRVEVDGIQAWWDLDAKEILGDEADQYVKVPDTLDVWFDSGSTHFSVVDVRPEFAGHAADMYLEGSDQHRGWFMSSLMISTAMKGKAPYRQVLTHGFTVDGQGRKMSKSIGNTVSPQDVMNKLGADILRLWVASTDYTGEMAVSDEILKRAADSYRRIRNTARFLLANLNGFDPAKDMVKPEEMVVLDRWAVGCAKAAQEDILKAYEAYDFHEVVQRLMRFCSVEMGSFYLDIIKDRQYTAKADSVARRSCQTALYHIAEALVRWMAPILSFTADEVWGYLPGEREKYVFTGEWYEGLFGLADSEAMNDAFWDELLKVRGEVNKVIEQARADKKVGGSLEAAVTLYAEPELAAKLTALGDELRFVLLTSGATVADYHDAPADAQQSEVLKGLKVALSKAEGEKCPRCWHYTQDVGKVAEHAEICGRCVSNVAGDGEKRKFA.

The 'HIGH' region signature appears at 58-68; it reads PYANGSIHIGH. Position 183 is an N6-acetyllysine (lysine 183). L-isoleucyl-5'-AMP is bound at residue glutamate 561. The short motif at 602 to 606 is the 'KMSKS' region element; sequence KMSKS. Lysine 605 contributes to the ATP binding site. The Zn(2+) site is built by cysteine 901, cysteine 904, cysteine 921, and cysteine 924.

It belongs to the class-I aminoacyl-tRNA synthetase family. IleS type 1 subfamily. Monomer. Requires Zn(2+) as cofactor.

Its subcellular location is the cytoplasm. The catalysed reaction is tRNA(Ile) + L-isoleucine + ATP = L-isoleucyl-tRNA(Ile) + AMP + diphosphate. In terms of biological role, catalyzes the attachment of isoleucine to tRNA(Ile). As IleRS can inadvertently accommodate and process structurally similar amino acids such as valine, to avoid such errors it has two additional distinct tRNA(Ile)-dependent editing activities. One activity is designated as 'pretransfer' editing and involves the hydrolysis of activated Val-AMP. The other activity is designated 'posttransfer' editing and involves deacylation of mischarged Val-tRNA(Ile). In Shigella boydii serotype 4 (strain Sb227), this protein is Isoleucine--tRNA ligase.